Here is a 166-residue protein sequence, read N- to C-terminus: Small ribosomal subunit protein uS5 (166 aa).

Residues L11–V74 form the S5 DRBM domain.

Belongs to the universal ribosomal protein uS5 family. Part of the 30S ribosomal subunit. Contacts proteins S4 and S8.

In terms of biological role, with S4 and S12 plays an important role in translational accuracy. Its function is as follows. Located at the back of the 30S subunit body where it stabilizes the conformation of the head with respect to the body. This Enterococcus faecalis (strain ATCC 700802 / V583) protein is Small ribosomal subunit protein uS5.